The primary structure comprises 926 residues: MTTKDYPSLWGFGTTKTFKIPIEHLDFKYIEKCSDVKHLEKILCVLRSGEEGYYPELTEFCEKHLQALAPESRALRKDKPAATAASFTAEEWEKIDGDIKSWVSEIKKEEDKMHFHETETFPAMKDNLPPVRGSNSCLHVGKEKYSKRPTKKKTPRDYAEWDKFDVEKECLKIDEDYKEKTVIDKSHLSKIETRIDTAGLTEKEKDFLATREKEKGNEAFNSGDYEEAVMYYTRSISALPTVVAYNNRAQAEIKLQNWNSAFQDCEKVLELEPGNVKALLRRATTYKHQNKLREATEDLSKVLDVEPDNDLAKKTLSEVERDLKNSEAASETQTKGKRMVIQEIENSEDEEGKSGRKHEDGGGDKKPAEPAGAARAAQPCVMGNIQKKLTGKAEGGKRPARGAPQRGQTPEAGADKRSPRRASAAAAAGGGATGHPGGGQGAENPAGLKSQGNELFRSGQFAEAAGKYSAAIALLEPAGSEIADDLSILYSNRAACYLKEGNCSGCIQDCNRALELHPFSMKPLLRRAMAYETLEQYGKAYVDYKTVLQIDCGLQLANDSVNRLSRILMELDGPNWREKLSPIPAVPASVPLQAWHPAKEMISKQAGDSSSHRQQGITDEKTFKALKEEGNQCVNDKNYKDALSKYSECLKINNKECAIYTNRALCYLKLCQFEEAKQDCDQALQLADGNVKAFYRRALAHKGLKNYQKSLIDLNKVILLDPSIIEAKMELEEVTRLLNLKDKTAPFNKEKERRKIEIQEVNEGKEEPGRPAGEVSMGCLASEKGGKSSRSPEDPEKLPIAKPNNAYEFGQIINALSTRKDKEACAHLLAITAPKDLPMFLSNKLEGDTFLLLIQSLKNNLIEKDPSLVYQHLLYLSKAERFKMMLTLISKGQKELIEQLFEDLSDTPNNHFTLEDIQALKRQYEL.

TPR repeat units follow at residues 209–242, 244–275, and 276–309; these read ATRE…LPTV, AYNN…EPGN, and VKAL…EPDN. The tract at residues 318-452 is disordered; the sequence is EVERDLKNSE…ENPAGLKSQG (135 aa). Serine 347 and serine 354 each carry phosphoserine. Over residues 352–368 the composition is skewed to basic and acidic residues; it reads GKSGRKHEDGGGDKKPA. Low complexity predominate over residues 369-379; it reads EPAGAARAAQP. Phosphoserine is present on serine 423. Over residues 428–441 the composition is skewed to gly residues; sequence AGGGATGHPGGGQG. TPR repeat units follow at residues 445–478, 487–520, 522–554, 623–656, 657–690, and 692–724; these read PAGL…LEPA, SILY…HPFS, KPLL…DCGL, FKAL…NNKE, CAIY…ADGN, and KAFY…DPSI. Basic and acidic residues-rich tracts occupy residues 758-769 and 784-799; these read IQEVNEGKEEPG and KGGK…EKLP. The interval 758–801 is disordered; it reads IQEVNEGKEEPGRPAGEVSMGCLASEKGGKSSRSPEDPEKLPIA. Position 781–788 (781–788) interacts with GTP; that stretch reads ASEKGGKS. Serine 791 is modified (phosphoserine).

As to expression, present in most tissues, including lung, with the strongest expression in brain, colon, kidney, and testis. In sperm and testis, detected in particular in pachytene primary spermatocytes. Up-regulated in pancreatic tumor tissues and not in normal pancreatic tissue.

Its subcellular location is the cytoplasm. It is found in the dynein axonemal particle. Its function is as follows. May play a role in the cytoplasmic assembly of the ciliary dynein arms. May play a role in fertilization. Binds GTP and has GTPase activity. This chain is Sperm-associated antigen 1 (SPAG1), found in Homo sapiens (Human).